The following is a 151-amino-acid chain: UPF0178 protein CPS_3584 (151 aa).

Belongs to the UPF0178 family.

The sequence is that of UPF0178 protein CPS_3584 from Colwellia psychrerythraea (strain 34H / ATCC BAA-681) (Vibrio psychroerythus).